The primary structure comprises 614 residues: Nuclear receptor subfamily 1 group D member 1 (614 aa).

The span at 1 to 12 (MTTLDSNNNTGG) shows a compositional bias: polar residues. The interval 1–70 (MTTLDSNNNT…TQDPARSFGS (70 aa)) is required for phosphorylation by CSNK1E and cytoplasmic localization. The interval 1–119 (MTTLDSNNNT…SSRVSPSKST (119 aa)) is disordered. Positions 1–128 (MTTLDSNNNT…TSNITKLNGM (128 aa)) are modulating. Residues 14–34 (ITYIGSSGSSPSRTSPESLYS) are compositionally biased toward low complexity. Residues 35–48 (DNSNGSFQSLTQGC) show a composition bias toward polar residues. The segment at 49 to 284 (PTYFPPSPTG…PPRSPSPEPT (236 aa)) is crucial for activation of GJA1. Ser-55 and Ser-59 each carry phosphoserine; by GSK3-beta. Residues 69–102 (GSIPPSLSDDGSPSSSSSSSSSSSSFYNGSPPGS) show a composition bias toward low complexity. A DNA-binding region (nuclear receptor) is located at residues 129–205 (VLLCKVCGDV…VGMSRDAVRF (77 aa)). 2 consecutive NR C4-type zinc fingers follow at residues 132–152 (CKVC…CEGC) and 169–193 (CLKN…FKKC). Residues Lys-191 and Lys-192 each carry the N6-acetyllysine; by KAT5 modification. A compositionally biased stretch (polar residues) spans 233–243 (SQCPLETSPTQ). Disordered regions lie at residues 233-285 (SQCP…EPTV) and 311-345 (PGNF…DNNT). Residues 244 to 261 (HPTPGPMGPSPPPAPVPS) show a composition bias toward pro residues. At Thr-274 the chain carries Phosphothreonine; by CDK1. The NR LBD domain maps to 284 to 614 (TVEDVISQVA…KLLSFRVDAQ (331 aa)). Over residues 311-324 (PGNFNANHASGSPP) the composition is skewed to polar residues. An N6-acetyllysine modification is found at Lys-400. Cys-418 is a binding site for heme. Lys-591 carries the N6-acetyllysine modification. His-602 contributes to the heme binding site.

This sequence belongs to the nuclear hormone receptor family. NR1 subfamily. Binds DNA as a monomer or a homodimer. Interacts with C1D, NR2E3 and SP1. Interacts with OPHN1 (via C-terminus). Interacts with ZNHIT1. Interacts with PER2; the interaction associates PER2 to BMAL1 promoter region. Interacts with CRY1. Interacts with CCAR2. Interacts with SIAH2. Interacts with CDK1. Interacts with FBXW7. Interacts with HUWE1. Interacts with NR0B2. Interacts with NFIL3. Interacts (via domain NR LBD) with HSP90AA1 and HSP90AB1. In terms of processing, ubiquitinated, leading to its proteasomal degradation. Ubiquitinated by SIAH2; leading to its proteasomal degradation. Ubiquitinated by the SCF(FBXW7) complex when phosphorylated by CDK1 leading to its proteasomal degradation. Rapidly ubiquitinated in response to inflammatory triggers and sumoylation is a prerequisite to its ubiquitination. Sumoylated by UBE2I, desumoylated by SENP1, and sumoylation is a prerequisite to its ubiquitination. Post-translationally, phosphorylated by CSNK1E; phosphorylation enhances its cytoplasmic localization. In terms of processing, undergoes lysosome-mediated degradation in a time-dependent manner in the liver. As to expression, widely expressed. Expressed at high levels in the liver, adipose tissue, skeletal muscle and brain. Also expressed in endothelial cells (ECs), vascular smooth muscle cells (VSMCs) and macrophages. Expression oscillates diurnally in the suprachiasmatic nucleus (SCN) of the hypothalamus as well as in peripheral tissues. Expression increases during the differentiation of pre-adipocytes into mature adipocytes. Expressed at high levels in some squamous carcinoma cell lines.

The protein localises to the nucleus. It is found in the cytoplasm. Its subcellular location is the cell projection. The protein resides in the dendrite. It localises to the dendritic spine. Functionally, transcriptional repressor which coordinates circadian rhythm and metabolic pathways in a heme-dependent manner. Integral component of the complex transcription machinery that governs circadian rhythmicity and forms a critical negative limb of the circadian clock by directly repressing the expression of core clock components BMAL1, CLOCK and CRY1. Also regulates genes involved in metabolic functions, including lipid and bile acid metabolism, adipogenesis, gluconeogenesis and the macrophage inflammatory response. Acts as a receptor for heme which stimulates its interaction with the NCOR1/HDAC3 corepressor complex, enhancing transcriptional repression. Recognizes two classes of DNA response elements within the promoter of its target genes and can bind to DNA as either monomers or homodimers, depending on the nature of the response element. Binds as a monomer to a response element composed of the consensus half-site motif 5'-[A/G]GGTCA-3' preceded by an A/T-rich 5' sequence (RevRE), or as a homodimer to a direct repeat of the core motif spaced by two nucleotides (RevDR-2). Acts as a potent competitive repressor of ROR alpha (RORA) function and regulates the levels of its ligand heme by repressing the expression of PPARGC1A, a potent inducer of heme synthesis. Regulates lipid metabolism by repressing the expression of APOC3 and by influencing the activity of sterol response element binding proteins (SREBPs); represses INSIG2 which interferes with the proteolytic activation of SREBPs which in turn govern the rhythmic expression of enzymes with key functions in sterol and fatty acid synthesis. Regulates gluconeogenesis via repression of G6PC1 and PEPCK and adipocyte differentiation via repression of PPARG. Regulates glucagon release in pancreatic alpha-cells via the AMPK-NAMPT-SIRT1 pathway and the proliferation, glucose-induced insulin secretion and expression of key lipogenic genes in pancreatic-beta cells. Positively regulates bile acid synthesis by increasing hepatic expression of CYP7A1 via repression of NR0B2 and NFIL3 which are negative regulators of CYP7A1. Modulates skeletal muscle oxidative capacity by regulating mitochondrial biogenesis and autophagy; controls mitochondrial biogenesis and respiration by interfering with the STK11-PRKAA1/2-SIRT1-PPARGC1A signaling pathway. Represses the expression of SERPINE1/PAI1, an important modulator of cardiovascular disease and the expression of inflammatory cytokines and chemokines in macrophages. Represses gene expression at a distance in macrophages by inhibiting the transcription of enhancer-derived RNAs (eRNAs). Plays a role in the circadian regulation of body temperature and negatively regulates thermogenic transcriptional programs in brown adipose tissue (BAT); imposes a circadian oscillation in BAT activity, increasing body temperature when awake and depressing thermogenesis during sleep. In concert with NR2E3, regulates transcriptional networks critical for photoreceptor development and function. In addition to its activity as a repressor, can also act as a transcriptional activator. In the ovarian granulosa cells acts as a transcriptional activator of STAR which plays a role in steroid biosynthesis. In collaboration with SP1, activates GJA1 transcription in a heme-independent manner. Represses the transcription of CYP2B10, CYP4A10 and CYP4A14. Represses the transcription of CES2. Represses and regulates the circadian expression of TSHB in a NCOR1-dependent manner. Negatively regulates the protein stability of NR3C1 and influences the time-dependent subcellular distribution of NR3C1, thereby affecting its transcriptional regulatory activity. Plays a critical role in the circadian control of neutrophilic inflammation in the lung; under resting, non-stress conditions, acts as a rhythmic repressor to limit inflammatory activity whereas in the presence of inflammatory triggers undergoes ubiquitin-mediated degradation thereby relieving inhibition of the inflammatory response. Plays a key role in the circadian regulation of microglial activation and neuroinflammation; suppresses microglial activation through the NF-kappaB pathway in the central nervous system. Plays a role in the regulation of the diurnal rhythms of lipid and protein metabolism in the skeletal muscle via transcriptional repression of genes controlling lipid and amino acid metabolism in the muscle. This chain is Nuclear receptor subfamily 1 group D member 1 (NR1D1), found in Homo sapiens (Human).